The following is a 396-amino-acid chain: Putative O-antigen transporter (396 aa).

A run of 11 helical transmembrane segments spans residues 5-25, 32-52, 82-102, 107-127, 137-157, 163-183, 211-231, 286-306, 322-342, 348-368, and 372-392; these read ILLL…VLPY, IETF…SLIV, IVKL…LMYV, LIYP…FATW, AVVI…FILV, IVAA…ISIY, FFLS…LLSF, AIFG…LTTI, MFLL…MLIP, ILSR…FPLV, and GAWG…LFML.

Belongs to the polysaccharide synthase family.

Its subcellular location is the cell inner membrane. It functions in the pathway bacterial outer membrane biogenesis; LPS O-antigen biosynthesis. Its function is as follows. May be involved in the translocation process of the nascent O-polysaccharide molecules and/or its ligation to lipid A core units. This is Putative O-antigen transporter (rfbX) from Shigella dysenteriae.